A 430-amino-acid polypeptide reads, in one-letter code: Serine hydroxymethyltransferase 2 (430 aa).

(6S)-5,6,7,8-tetrahydrofolate-binding positions include Leu128 and Gly132–Leu134. Residue Lys237 is modified to N6-(pyridoxal phosphate)lysine.

It belongs to the SHMT family. In terms of assembly, homodimer. Pyridoxal 5'-phosphate serves as cofactor.

It localises to the cytoplasm. The enzyme catalyses (6R)-5,10-methylene-5,6,7,8-tetrahydrofolate + glycine + H2O = (6S)-5,6,7,8-tetrahydrofolate + L-serine. The protein operates within one-carbon metabolism; tetrahydrofolate interconversion. It participates in amino-acid biosynthesis; glycine biosynthesis; glycine from L-serine: step 1/1. Its function is as follows. Catalyzes the reversible interconversion of serine and glycine with tetrahydrofolate (THF) serving as the one-carbon carrier. This reaction serves as the major source of one-carbon groups required for the biosynthesis of purines, thymidylate, methionine, and other important biomolecules. Also exhibits THF-independent aldolase activity toward beta-hydroxyamino acids, producing glycine and aldehydes, via a retro-aldol mechanism. The sequence is that of Serine hydroxymethyltransferase 2 from Rhodospirillum rubrum (strain ATCC 11170 / ATH 1.1.1 / DSM 467 / LMG 4362 / NCIMB 8255 / S1).